A 442-amino-acid chain; its full sequence is Histidine--tRNA ligase (442 aa).

It belongs to the class-II aminoacyl-tRNA synthetase family. In terms of assembly, homodimer.

The protein resides in the cytoplasm. The enzyme catalyses tRNA(His) + L-histidine + ATP = L-histidyl-tRNA(His) + AMP + diphosphate + H(+). The protein is Histidine--tRNA ligase of Psychrobacter arcticus (strain DSM 17307 / VKM B-2377 / 273-4).